Consider the following 335-residue polypeptide: Dihydroorotate dehydrogenase (quinone) (335 aa).

Residues 61–65 (AGLDK) and threonine 85 each bind FMN. Lysine 65 lines the substrate pocket. 110 to 114 (NRMGF) lines the substrate pocket. Residues asparagine 138 and asparagine 171 each contribute to the FMN site. Position 171 (asparagine 171) interacts with substrate. Serine 174 functions as the Nucleophile in the catalytic mechanism. Asparagine 176 provides a ligand contact to substrate. Lysine 216 and threonine 244 together coordinate FMN. 245–246 (NT) provides a ligand contact to substrate. Residues glycine 267, glycine 296, and 317–318 (YS) contribute to the FMN site.

Belongs to the dihydroorotate dehydrogenase family. Type 2 subfamily. In terms of assembly, monomer. FMN is required as a cofactor.

The protein localises to the cell membrane. The catalysed reaction is (S)-dihydroorotate + a quinone = orotate + a quinol. It functions in the pathway pyrimidine metabolism; UMP biosynthesis via de novo pathway; orotate from (S)-dihydroorotate (quinone route): step 1/1. Catalyzes the conversion of dihydroorotate to orotate with quinone as electron acceptor. This Pseudoalteromonas atlantica (strain T6c / ATCC BAA-1087) protein is Dihydroorotate dehydrogenase (quinone).